We begin with the raw amino-acid sequence, 198 residues long: NAD(P)H dehydrogenase (quinone) (198 aa).

In terms of domain architecture, Flavodoxin-like spans 4–190; it reads VLVLYYSAYG…EGAKYQGAHV (187 aa). FMN contacts are provided by residues 10-15 and 78-80; these read SAYGHI and TRF. Residue Tyr-12 coordinates NAD(+). Residue Trp-98 coordinates substrate. FMN-binding positions include 113 to 119 and His-134; that span reads SSATQHG.

This sequence belongs to the WrbA family. It depends on FMN as a cofactor.

It carries out the reaction a quinone + NADH + H(+) = a quinol + NAD(+). The enzyme catalyses a quinone + NADPH + H(+) = a quinol + NADP(+). The chain is NAD(P)H dehydrogenase (quinone) from Rhizobium johnstonii (strain DSM 114642 / LMG 32736 / 3841) (Rhizobium leguminosarum bv. viciae).